Consider the following 468-residue polypeptide: Glutamate--tRNA ligase (468 aa).

Residues 12 to 22 (PSPTGFIHLGN) carry the 'HIGH' region motif. Positions 244 to 248 (KMSKR) match the 'KMSKS' region motif. ATP is bound at residue K247.

This sequence belongs to the class-I aminoacyl-tRNA synthetase family. Glutamate--tRNA ligase type 1 subfamily. Monomer.

It is found in the cytoplasm. It carries out the reaction tRNA(Glu) + L-glutamate + ATP = L-glutamyl-tRNA(Glu) + AMP + diphosphate. Functionally, catalyzes the attachment of glutamate to tRNA(Glu) in a two-step reaction: glutamate is first activated by ATP to form Glu-AMP and then transferred to the acceptor end of tRNA(Glu). The polypeptide is Glutamate--tRNA ligase (Polynucleobacter asymbioticus (strain DSM 18221 / CIP 109841 / QLW-P1DMWA-1) (Polynucleobacter necessarius subsp. asymbioticus)).